The following is a 1901-amino-acid chain: A-kinase anchor protein 11 (1901 aa).

Phosphoserine occurs at positions 18, 422, 433, 444, and 448. The disordered stretch occupies residues 407-443; the sequence is ALPANVRKPTPRKPESPYGNLCDAPDSPRPVKASRED. Disordered regions lie at residues 843–864 and 971–993; these read NPGN…SSSK and LPVS…DSQN. Thr981 and Thr1100 each carry phosphothreonine. A disordered region spans residues 1131-1153; the sequence is EFAPATPPSTPHNSSVGSLSENE. The segment covering 1141-1153 has biased composition (polar residues); the sequence is PHNSSVGSLSENE. A phosphoserine mark is found at Ser1171, Ser1176, Ser1177, Ser1242, and Ser1337. Thr1485 bears the Phosphothreonine mark. Ser1580 carries the post-translational modification Phosphoserine. Residues 1650-1663 are PKA-RII subunit binding domain; sequence LAEKIVAEAIEKAE. Residues 1708–1805 are disordered; the sequence is KEIEDFQSTE…HEDEVEGLGQ (98 aa). A compositionally biased stretch (polar residues) spans 1713 to 1740; sequence FQSTESVSSQQMNLSIGDDSTGSWSNLS. Basic and acidic residues predominate over residues 1747-1756; that stretch reads DESSSFHHLS. A compositionally biased stretch (low complexity) spans 1757–1772; the sequence is ESNGNSSSWSSLGLEG. Residues 1787-1801 show a composition bias toward acidic residues; it reads DGPDDKDEEHEDEVE.

Belongs to the AKAP110 family. Expressed in heart, brain, lung, liver, kidney, testis and ovary. Weakly expressed in skeletal muscle, pancreas and spleen.

Its subcellular location is the cytoplasm. The protein resides in the cytoskeleton. The protein localises to the microtubule organizing center. It is found in the centrosome. Its function is as follows. Binds to type II regulatory subunits of protein kinase A and anchors/targets them. This Homo sapiens (Human) protein is A-kinase anchor protein 11 (AKAP11).